The chain runs to 365 residues: Ferrochelatase (365 aa).

His211 and Glu292 together coordinate Fe cation.

Belongs to the ferrochelatase family.

It is found in the cytoplasm. The enzyme catalyses heme b + 2 H(+) = protoporphyrin IX + Fe(2+). Its pathway is porphyrin-containing compound metabolism; protoheme biosynthesis; protoheme from protoporphyrin-IX: step 1/1. Functionally, catalyzes the ferrous insertion into protoporphyrin IX. This chain is Ferrochelatase, found in Aromatoleum aromaticum (strain DSM 19018 / LMG 30748 / EbN1) (Azoarcus sp. (strain EbN1)).